We begin with the raw amino-acid sequence, 141 residues long: Putative pre-16S rRNA nuclease (141 aa).

Belongs to the YqgF nuclease family.

The protein localises to the cytoplasm. In terms of biological role, could be a nuclease involved in processing of the 5'-end of pre-16S rRNA. This Vibrio parahaemolyticus serotype O3:K6 (strain RIMD 2210633) protein is Putative pre-16S rRNA nuclease.